Reading from the N-terminus, the 562-residue chain is Protein wntless (562 aa).

The Cytoplasmic portion of the chain corresponds to 1–15 (MSGTILENLSGRKLS). The helical transmembrane segment at 16-36 (ILVSSLMLCQVVCFLMGGLFA) threads the bilayer. Over 37–239 (PVPAGHQTVL…AIHQNGGFTQ (203 aa)) the chain is Lumenal. N-linked (GlcNAc...) asparagine glycans are attached at residues Asn58 and Asn103. The chain crosses the membrane as a helical span at residues 240–260 (VWLVLKTLLFPFVIGIMMWFW). Residues 261–275 (RRVHILQRSPALLEY) lie on the Cytoplasmic side of the membrane. The helical transmembrane segment at 276–296 (MLFYLGGALSFLNLPLELLTL) threads the bilayer. Topologically, residues 297–311 (GVEMPYMLLLSDVRQ) are lumenal. The helical transmembrane segment at 312-332 (GIFYAMLLSFWLVFAGEHMLI) threads the bilayer. Topologically, residues 333-344 (QDSPSKSTIRSR) are cytoplasmic. The helical transmembrane segment at 345–365 (YWKHLSAVVVGCISLFVFDIC) threads the bilayer. Residues 366-390 (ERGVQMRNPFYSIWTTPLGAKVAMS) are Lumenal-facing. Residues 391-411 (FIVLAGVSAAIYFLFLCFMVW) form a helical membrane-spanning segment. At 412–441 (KVFKDIGDKRTSLPSMSQARRLHYEGLIYR) the chain is on the cytoplasmic side. A helical membrane pass occupies residues 442–462 (FKFLMLATLLCAGLTVAGFIM). Residues 463-482 (GQMAEGHWKWNENIEIQLTS) are Lumenal-facing. Residues 483-503 (AFLTGVYGMWNIYIFALIILY) traverse the membrane as a helical segment. The Cytoplasmic portion of the chain corresponds to 504–562 (APSHKQWPTMRHSDETTQSNENIVASAASEEIEFSNLPSDSNPSEISSLTSFTRKVAFD).

It belongs to the wntless family. As to quaternary structure, interacts with wg; in the Golgi. Interacts with Vps35, a component of the retromer complex; wls stability is regulated by Vps35.

The protein resides in the presynaptic cell membrane. Its subcellular location is the postsynaptic cell membrane. It is found in the cell membrane. It localises to the endoplasmic reticulum membrane. The protein localises to the endosome membrane. The protein resides in the golgi apparatus membrane. Its function is as follows. A segment polarity gene required for wingless (wg)-dependent patterning processes, acting in both wg-sending cells and wg-target cells. In non-neuronal cells wls directs wg secretion. The wls traffic loop encompasses the Golgi, the cell surface, an endocytic compartment and a retrograde route leading back to the Golgi, and involves clathrin-mediated endocytosis and the retromer complex (a conserved protein complex consisting of Vps35 and Vps26). In neuronal cells (the larval motorneuron NMJ), the wg signal moves across the synapse via the release of wls-containing exosome-like vesicles. Postsynaptic wls is required for the trafficking of fz2 through the fz2-interacting protein Grip. This is Protein wntless from Drosophila grimshawi (Hawaiian fruit fly).